The following is a 346-amino-acid chain: UDP-3-O-acylglucosamine N-acyltransferase (346 aa).

Histidine 253 serves as the catalytic Proton acceptor.

Belongs to the transferase hexapeptide repeat family. LpxD subfamily. In terms of assembly, homotrimer.

It catalyses the reaction a UDP-3-O-[(3R)-3-hydroxyacyl]-alpha-D-glucosamine + a (3R)-hydroxyacyl-[ACP] = a UDP-2-N,3-O-bis[(3R)-3-hydroxyacyl]-alpha-D-glucosamine + holo-[ACP] + H(+). Its pathway is bacterial outer membrane biogenesis; LPS lipid A biosynthesis. Functionally, catalyzes the N-acylation of UDP-3-O-acylglucosamine using 3-hydroxyacyl-ACP as the acyl donor. Is involved in the biosynthesis of lipid A, a phosphorylated glycolipid that anchors the lipopolysaccharide to the outer membrane of the cell. This chain is UDP-3-O-acylglucosamine N-acyltransferase, found in Rickettsia peacockii (strain Rustic).